A 95-amino-acid polypeptide reads, in one-letter code: Co-chaperonin GroES (95 aa).

The protein belongs to the GroES chaperonin family. In terms of assembly, heptamer of 7 subunits arranged in a ring. Interacts with the chaperonin GroEL.

It localises to the cytoplasm. Its function is as follows. Together with the chaperonin GroEL, plays an essential role in assisting protein folding. The GroEL-GroES system forms a nano-cage that allows encapsulation of the non-native substrate proteins and provides a physical environment optimized to promote and accelerate protein folding. GroES binds to the apical surface of the GroEL ring, thereby capping the opening of the GroEL channel. The sequence is that of Co-chaperonin GroES from Chlorobium luteolum (strain DSM 273 / BCRC 81028 / 2530) (Pelodictyon luteolum).